Reading from the N-terminus, the 619-residue chain is Long-chain fatty acid transport protein 6 (619 aa).

The next 2 membrane-spanning stretches (helical) occupy residues 22–42 (LLFPYFWDDFWYLLKVVRYGI) and 119–139 (VHVWFGLAKLGCVVAFLNSNL). Residue 221 to 232 (YIFTSGTTGLPK) coordinates AMP.

This sequence belongs to the ATP-dependent AMP-binding enzyme family.

Its subcellular location is the cell membrane. The protein resides in the sarcolemma. It catalyses the reaction a fatty acid(in) = a fatty acid(out). The enzyme catalyses hexadecanoate(out) = hexadecanoate(in). It carries out the reaction (9Z,12Z)-octadecadienoate(out) = (9Z,12Z)-octadecadienoate(in). The catalysed reaction is (9Z)-octadecenoate(out) = (9Z)-octadecenoate(in). It catalyses the reaction a very long-chain fatty acid + ATP + CoA = a very long-chain fatty acyl-CoA + AMP + diphosphate. The enzyme catalyses tetracosanoate + ATP + CoA = tetracosanoyl-CoA + AMP + diphosphate. It carries out the reaction a long-chain fatty acid + ATP + CoA = a long-chain fatty acyl-CoA + AMP + diphosphate. The catalysed reaction is (9Z)-octadecenoate + ATP + CoA = (9Z)-octadecenoyl-CoA + AMP + diphosphate. It catalyses the reaction (5Z,8Z,11Z,14Z)-eicosatetraenoate + ATP + CoA = (5Z,8Z,11Z,14Z)-eicosatetraenoyl-CoA + AMP + diphosphate. Functionally, mediates the import of long-chain fatty acids (LCFA) into the cell by facilitating their transport at the plasma membrane. Also functions as an acyl-CoA ligase catalyzing the ATP-dependent formation of fatty acyl-CoA using LCFA and very-long-chain fatty acids (VLCFA) as substrates. Plays a pivotal role in regulating available LCFA substrates from exogenous sources in tissues undergoing high levels of beta-oxidation such as the heart. The sequence is that of Long-chain fatty acid transport protein 6 (Slc27a6) from Mus musculus (Mouse).